The primary structure comprises 356 residues: MMRPPEHQLLSSLDQRSRDIFRLIVETYLNDGDPVGSRNLSRLLPHTLSPATIRNVMSDLEHLGLIYAPHISAGRLPTQIGLRFFVDAFLEVGDLPPEERSSIEAQVRAAGTSNSVESVLTEASQVLSGLSRGAGLVLTNKTDVALKHIEFVRLEPMRALAVLVMQNGDVENRVIDLPAGISTSQLIEASNFLNAHIHGHTLSEAKSELRKLSEETRRELDQLSQELVAKGLAVWSGAGADQPARLIVRGRANLLENVHAQEDIERLRHLFDDLETKDGMVQLLDLAEAGSGVRIFIGSENKLFSLSGSSLVVAPYRDSEQRVIGALGVIGPTRLNYARIVPMVDYTAQIVSRLLR.

It belongs to the HrcA family.

In terms of biological role, negative regulator of class I heat shock genes (grpE-dnaK-dnaJ and groELS operons). Prevents heat-shock induction of these operons. This is Heat-inducible transcription repressor HrcA from Brucella abortus (strain S19).